A 576-amino-acid polypeptide reads, in one-letter code: RING finger and SPRY domain-containing protein 1 (576 aa).

The first 16 residues, 1–16 (MIVFGWAVFLASRSLG), serve as a signal peptide directing secretion. Ser-50 carries the post-translational modification Phosphoserine. The interval 50–99 (SGTDDSVDTQQQQAENSAVPTADTRSQPRDPVRPPRRGRGPHEPRRKKQN) is disordered. The segment covering 57-68 (DTQQQQAENSAV) has biased composition (polar residues). The segment covering 83–97 (PPRRGRGPHEPRRKK) has biased composition (basic residues). A B30.2/SPRY domain is found at 300–483 (LFLKEGRQLT…CEFNFGAKPF (184 aa)). Residue Asn-314 is glycosylated (N-linked (GlcNAc...) asparagine). The RING-type zinc finger occupies 527–562 (CSLCCDEVADTQLKPCGHSDLCMDCALQLETCPLCR).

Its subcellular location is the secreted. The chain is RING finger and SPRY domain-containing protein 1 (RSPRY1) from Homo sapiens (Human).